The chain runs to 476 residues: Bifunctional protein GlmU (476 aa).

Residues 1–235 (MTALDIIIMA…ALQVAGVNSP (235 aa)) are pyrophosphorylase. UDP-N-acetyl-alpha-D-glucosamine contacts are provided by residues lysine 23, glutamine 81, 86-87 (GT), 108-110 (SGD), glycine 145, glutamate 160, and asparagine 233. Mg(2+) is bound at residue aspartate 110. Asparagine 233 serves as a coordination point for Mg(2+). Residues 236-256 (AQLADLERAHQRAQAAALMEQ) are linker. An N-acetyltransferase region spans residues 257–476 (GVRLADPARF…WKRPAKQAKG (220 aa)). Residues arginine 351 and lysine 369 each coordinate UDP-N-acetyl-alpha-D-glucosamine. The active-site Proton acceptor is the histidine 381. The UDP-N-acetyl-alpha-D-glucosamine site is built by tyrosine 384 and asparagine 395. Acetyl-CoA contacts are provided by residues alanine 398, 404–405 (NY), serine 423, glycine 441, and arginine 458.

In the N-terminal section; belongs to the N-acetylglucosamine-1-phosphate uridyltransferase family. The protein in the C-terminal section; belongs to the transferase hexapeptide repeat family. As to quaternary structure, homotrimer. Requires Mg(2+) as cofactor.

It localises to the cytoplasm. The enzyme catalyses alpha-D-glucosamine 1-phosphate + acetyl-CoA = N-acetyl-alpha-D-glucosamine 1-phosphate + CoA + H(+). It catalyses the reaction N-acetyl-alpha-D-glucosamine 1-phosphate + UTP + H(+) = UDP-N-acetyl-alpha-D-glucosamine + diphosphate. It participates in nucleotide-sugar biosynthesis; UDP-N-acetyl-alpha-D-glucosamine biosynthesis; N-acetyl-alpha-D-glucosamine 1-phosphate from alpha-D-glucosamine 6-phosphate (route II): step 2/2. Its pathway is nucleotide-sugar biosynthesis; UDP-N-acetyl-alpha-D-glucosamine biosynthesis; UDP-N-acetyl-alpha-D-glucosamine from N-acetyl-alpha-D-glucosamine 1-phosphate: step 1/1. The protein operates within bacterial outer membrane biogenesis; LPS lipid A biosynthesis. In terms of biological role, catalyzes the last two sequential reactions in the de novo biosynthetic pathway for UDP-N-acetylglucosamine (UDP-GlcNAc). The C-terminal domain catalyzes the transfer of acetyl group from acetyl coenzyme A to glucosamine-1-phosphate (GlcN-1-P) to produce N-acetylglucosamine-1-phosphate (GlcNAc-1-P), which is converted into UDP-GlcNAc by the transfer of uridine 5-monophosphate (from uridine 5-triphosphate), a reaction catalyzed by the N-terminal domain. In Acidovorax sp. (strain JS42), this protein is Bifunctional protein GlmU.